The following is a 283-amino-acid chain: NifU-like protein 4, mitochondrial (283 aa).

The N-terminal 48 residues, 1–48, are a transit peptide targeting the mitochondrion; sequence MKGIARLVTSLSRIGGRKVVSGTSTVTSSSSSSLLLSRRSLFISATNL.

Belongs to the NifU family. In terms of tissue distribution, predominantly expressed in roots.

It is found in the mitochondrion. Functionally, molecular scaffold for [Fe-S] cluster assembly of mitochondrial iron-sulfur proteins. The protein is NifU-like protein 4, mitochondrial (NIFU4) of Arabidopsis thaliana (Mouse-ear cress).